Consider the following 994-residue polypeptide: UPF0182 protein Strop_3729 (994 aa).

7 helical membrane-spanning segments follow: residues 18-38 (IGVL…VQAW), 61-81 (LLLF…NLWL), 110-130 (IGLW…LSAQ), 174-194 (FTAV…FGGI), 209-229 (AHLS…YVLD), 260-280 (ILAY…NAWM), and 283-303 (LVWP…IGGI). 2 disordered regions span residues 891–934 (GEQA…AEAA) and 970–994 (FEQA…SPGG). Pro residues predominate over residues 897-926 (PSPPPSDDETPPSPTPTPTPTTPSVTPPPL).

It belongs to the UPF0182 family.

It localises to the cell membrane. This chain is UPF0182 protein Strop_3729, found in Salinispora tropica (strain ATCC BAA-916 / DSM 44818 / JCM 13857 / NBRC 105044 / CNB-440).